Here is a 121-residue protein sequence, read N- to C-terminus: uncharacterized protein (121 aa).

Residues 1 to 121 (MGQVLSICSS…QQEREQIKWD (121 aa)) are disordered. G2 is lipidated: N-myristoyl glycine. The S-palmitoyl cysteine moiety is linked to residue C8. Composition is skewed to basic and acidic residues over residues 11–23 (KSKE…EKPT), 73–83 (AAEKRNIEKKK), 90–105 (RQLE…EHLQ), and 112–121 (QQEREQIKWD).

The protein to yeast YGL108C. Post-translationally, myristoylated. In terms of processing, the N-myristoylated protein is further palmitoylated.

The protein resides in the cytoplasm. It localises to the cytosol. This is an uncharacterized protein from Schizosaccharomyces pombe (strain 972 / ATCC 24843) (Fission yeast).